A 449-amino-acid polypeptide reads, in one-letter code: Hyaluronidase (449 aa).

Positions 1-23 (MYHIWIKFLAAWIFLKRFNGVHV) are cleaved as a signal peptide. 2 disulfide bridges follow: cysteine 47-cysteine 340 and cysteine 211-cysteine 227. Asparagine 67, asparagine 103, and asparagine 111 each carry an N-linked (GlcNAc...) asparagine glycan. Glutamate 135 acts as the Proton donor in catalysis. The N-linked (GlcNAc...) asparagine glycan is linked to asparagine 153. Asparagine 357 is a glycosylation site (N-linked (GlcNAc...) asparagine). Intrachain disulfides connect cysteine 365/cysteine 376, cysteine 370/cysteine 427, and cysteine 429/cysteine 438. Asparagine 401 carries an N-linked (GlcNAc...) asparagine glycan. In terms of domain architecture, EGF-like spans 427-438 (CQCYQGWKGLYC).

Belongs to the glycosyl hydrolase 56 family. As to quaternary structure, monomer. In terms of tissue distribution, expressed by the venom gland.

Its subcellular location is the secreted. It catalyses the reaction Random hydrolysis of (1-&gt;4)-linkages between N-acetyl-beta-D-glucosamine and D-glucuronate residues in hyaluronate.. Functionally, snake venom endo-hyaluronidase that degrades hyaluronan to smaller oligosaccharide fragments. In venom, it is not toxic by itself, but increases the diffusion of other venom proteins by degrading the extracellular matrix. In addition, it displays antiedematogenic activity. The sequence is that of Hyaluronidase from Echis pyramidum leakeyi (Leakey's carpet viper).